The chain runs to 419 residues: Histidine--tRNA ligase (419 aa).

The protein belongs to the class-II aminoacyl-tRNA synthetase family. In terms of assembly, homodimer.

It localises to the cytoplasm. The enzyme catalyses tRNA(His) + L-histidine + ATP = L-histidyl-tRNA(His) + AMP + diphosphate + H(+). The protein is Histidine--tRNA ligase of Synechococcus sp. (strain JA-3-3Ab) (Cyanobacteria bacterium Yellowstone A-Prime).